Reading from the N-terminus, the 210-residue chain is 3-demethoxyubiquinol 3-hydroxylase (210 aa).

Positions 59, 89, 92, 141, 173, and 176 each coordinate Fe cation.

Belongs to the COQ7 family. Fe cation is required as a cofactor.

It localises to the cell membrane. It catalyses the reaction a 5-methoxy-2-methyl-3-(all-trans-polyprenyl)benzene-1,4-diol + AH2 + O2 = a 3-demethylubiquinol + A + H2O. Its pathway is cofactor biosynthesis; ubiquinone biosynthesis. In terms of biological role, catalyzes the hydroxylation of 2-nonaprenyl-3-methyl-6-methoxy-1,4-benzoquinol during ubiquinone biosynthesis. The sequence is that of 3-demethoxyubiquinol 3-hydroxylase from Marinomonas sp. (strain MWYL1).